Reading from the N-terminus, the 662-residue chain is MRLMLLCCTWRDEPMGEEEGTDLPVCASCGQGIFDGQYLQALNADWHADCFRCGECGASLSHQYYEKDGRLYCKKDYWARFGELCHGCAEQITKGLVMVAGEQKYHPECFSCLNCRAFIGDGDTYALVERSKLYCGHCYYQMVVTPVIEQILPDSPGSRIPHTVTLVSIPACSDGKRGFSVSIDPHCGAQGCGAEHSRTVRVREVDPDCISPDVKNSIHVGDRILEINGTPIGHVPLDEIDLLIQETSRLLQLTIEHDPHEPLPRDLALPCSPLPDPHSPLRSPVPAPHGDLGTMRQRAVMRSCSTDKSPGSSSVGSPASQRKDIGRSESLRVVSRAHRIFRPSDLIHGEVLGKGCFGQAIKVTHRETGEVMVMKELIRFDEETQRTFLKEVKVMRCLEHPNVLKFIGVLYKEKRLNFITEYIKGGTLRGLIKSMDSHYPWSQRVSFAKDIAAGMAYLHSMNIIHRDLNSHNCLVRENKSVVVADFGLARLMVDEKNQPEHLQNLKKPDRKKRYTVVGNPYWMAPEMINGRSYDEKVDIFSFGIVLCEIIGRVSADPDYLPRTTDFGLNVRGFLERYCPPACPPSFFPIAACCCDLDPEKRPSFSKLEQWLETLRMHLDIRLPLSSQLEQLTCAFWETHRRGEGGLPPHPELPDTAPHLHPL.

2 LIM zinc-binding domains span residues 24 to 83 and 84 to 145; these read PVCA…RFGE and LCHG…MVVT. One can recognise a PDZ domain in the interval 166–259; it reads LVSIPACSDG…LLQLTIEHDP (94 aa). The tract at residues 262–328 is disordered; the sequence is PLPRDLALPC…ASQRKDIGRS (67 aa). The span at 272 to 287 shows a compositional bias: pro residues; that stretch reads SPLPDPHSPLRSPVPA. Over residues 309 to 320 the composition is skewed to low complexity; it reads SPGSSSVGSPAS. A Protein kinase domain is found at 346-611; sequence LIHGEVLGKG…PSFSKLEQWL (266 aa). Residues 352-360 and Lys-375 each bind ATP; that span reads LGKGCFGQA. Asp-467 is a catalytic residue.

It belongs to the protein kinase superfamily. TKL Ser/Thr protein kinase family. In terms of tissue distribution, expressed predominantly in the brain.

Its subcellular location is the cytoplasm. The protein resides in the nucleus. It is found in the cytoskeleton. It localises to the cell projection. The protein localises to the growth cone. The enzyme catalyses L-seryl-[protein] + ATP = O-phospho-L-seryl-[protein] + ADP + H(+). It carries out the reaction L-threonyl-[protein] + ATP = O-phospho-L-threonyl-[protein] + ADP + H(+). Protein kinase which regulates actin filament dynamics. Phosphorylates and inactivates the actin binding/depolymerizing factor cofilin, thereby stabilizing the actin cytoskeleton. Required for motility of the axon growth cone. In Gallus gallus (Chicken), this protein is LIM domain kinase 1 (LIMK1).